A 631-amino-acid chain; its full sequence is Fusexin 1 (631 aa).

Positions 1-19 (MRRAALILAFVLFIGLSSA) are cleaved as a signal peptide. Residues 20 to 90 (TVTSADSITY…THQDSKLKYS (71 aa)) form a domain I N-terminus region. Residues 20 to 537 (TVTSADSITY…NLFGGSGSGD (518 aa)) are Extracellular-facing. Residues 91–170 (TSTSDELRDI…KLATPAYIDN (80 aa)) form a domain II N-terminus region. The Ca(2+) site is built by D112, S146, Y149, and D150. C125 and C155 are joined by a disulfide. The tract at residues 143–148 (SVTSPV) is fusion loop, required for fusogenic activity, not required for membrane surface localization. The tract at residues 171–224 (PDEIFTAKAELQAGDKTIQSATLSNGDAGDGTVTDLGDSKISWNGNLDLGASEP) is domain I central section. Residues 225–316 (ENSRVIALYS…KDSSLDTGSF (92 aa)) are domain II C-terminus. Positions 317 to 348 (VYDTPELLSYPSFTVYVDAGENGYIEVTKPTG) are domain I C-terminus. Residues 349–455 (DPDIISTSST…SVSVTGIQQS (107 aa)) are domain III. Intrachain disulfides connect C389/C432, C457/C477, and C490/C506. A disordered region spans residues 443–467 (DSTSVSVTGIQQSECNPGDQRREKN). The domain IV, required for fusogenic activity stretch occupies residues 456-509 (ECNPGDQRREKNENDRWEIYTCQDNGLTYEYDVTCAEDEKAVAQGDNQFSCEKQ). Residues 510 to 537 (DDDSGGGDNTGSDSGLFSNLFGGSGSGD) form a stem region. A helical membrane pass occupies residues 538 to 558 (LLTQVHTALSILAGLVAGFFG). The Cytoplasmic segment spans residues 559–590 (YRGARWIHGETDIKGGFKLESRNVSRVKRGSP). The helical transmembrane segment at 591 to 611 (VAGIVGAVLGFVVGYGVASVF) threads the bilayer. Residue H612 is a topological domain, extracellular. A helical transmembrane segment spans residues 613–630 (PVVQIIVVLGIAVGLYYF). Position 631 (R631) is a topological domain, cytoplasmic.

The protein belongs to the HAP2/GCS1 family. Fusexin 1 subfamily. Monomer in solution, crystallizes as a trimer in high salt (2.5 M NaCl, 0.2 M CaCl(2)). The trimer is stabilized by interdomain contacts and numerous Ca(2+) and Na(+) ions.

It localises to the cell surface. The protein localises to the cell membrane. Exhibits fusogenic activity. Mediates cell-cell fusion in mammalian cells when present in both cells (bilateral fusion). This is Fusexin 1 from Uncultured archaeon.